Here is a 1805-residue protein sequence, read N- to C-terminus: Kinesin-like protein KIF13A (1805 aa).

One can recognise a Kinesin motor domain in the interval 5–352 (KVKVAVRVRP…LRYADRAKRI (348 aa)). Residue 102–109 (GQTGSGKS) participates in ATP binding. Residues 359 to 436 (NEDPNAKVIR…QLESMGISLE (78 aa)) are a coiled coil. An FHA domain is found at 469-519 (HTRVGADTSQDIQLFGIGIQPQHCEIDIASDGDVTLTPKENARSCVNGTLV). Over residues 556 to 567 (EKETGPPEHDLD) the composition is skewed to basic and acidic residues. Disordered stretches follow at residues 556–575 (EKETGPPEHDLDAASEASSE) and 633–656 (QQLSPDRQPQSSGPDRLAYSSQTA). Coiled-coil stretches lie at residues 602–775 (VQVL…LYGK) and 1100–1138 (DALIKRREYLDEQIKKVSNKTEKTEDDVEREAQLVEQWV). A Phosphoserine modification is found at Ser636. Ser1287 carries the phosphoserine modification. The segment covering 1385-1396 (TPNVHNVSSSRP) has biased composition (polar residues). The interval 1385–1404 (TPNVHNVSSSRPDLSGFDED) is disordered. 4 positions are modified to phosphoserine: Ser1454, Ile1481, Ser1490, and Met1494. The segment at 1507–1531 (PSGSNGSSMPVEHNSKREKKIDSEE) is disordered. A coiled-coil region spans residues 1518-1547 (EHNSKREKKIDSEEEENELEAINRKLISSQ). A compositionally biased stretch (basic and acidic residues) spans 1519-1528 (HNSKREKKID). Residues Ser1529 and Ser1572 each carry the phosphoserine modification. A compositionally biased stretch (low complexity) spans 1612-1621 (MVVPSSDSSD). Residues 1612 to 1645 (MVVPSSDSSDQLAIQTKDADSTEHSTPSLVHDFR) form a disordered region. Ser1648 and Ser1698 each carry phosphoserine. The segment at 1749–1779 (GLTDSSAGELSSRRSLPNKTGGKTVSDGLHH) is disordered. Polar residues predominate over residues 1751 to 1771 (TDSSAGELSSRRSLPNKTGGK).

This sequence belongs to the TRAFAC class myosin-kinesin ATPase superfamily. Kinesin family. In terms of assembly, interacts with AP2B1. Interacts with ZFYVE26. Interacts with AP1G1 and AP1G2. Widely expressed, with highest levels in heart, brain and skeletal muscle.

The protein localises to the cytoplasm. It is found in the cytoskeleton. It localises to the microtubule organizing center. Its subcellular location is the centrosome. The protein resides in the midbody. The protein localises to the endosome membrane. It is found in the golgi apparatus membrane. In terms of biological role, plus end-directed microtubule-dependent motor protein involved in intracellular transport and regulating various processes such as mannose-6-phosphate receptor (M6PR) transport to the plasma membrane, endosomal sorting during melanosome biogenesis and cytokinesis. Mediates the transport of M6PR-containing vesicles from trans-Golgi network to the plasma membrane via direct interaction with the AP-1 complex. During melanosome maturation, required for delivering melanogenic enzymes from recycling endosomes to nascent melanosomes by creating peripheral recycling endosomal subdomains in melanocytes. Also required for the abscission step in cytokinesis: mediates translocation of ZFYVE26, and possibly TTC19, to the midbody during cytokinesis. The sequence is that of Kinesin-like protein KIF13A (KIF13A) from Homo sapiens (Human).